A 1107-amino-acid chain; its full sequence is Voltage-gated delayed rectifier potassium channel KCNH8 (1107 aa).

The Cytoplasmic portion of the chain corresponds to 1-225 (MPVMKGLLAP…HFSTFKAGWD (225 aa)). The PAS domain occupies 18–90 (IATRFDGTHS…LQIEKSLEEK (73 aa)). The PAC domain occupies 93-145 (FKGEIMFYKKNGSPFWCLLDIVPIKNEKGDVVLFLASFKDITDTKVKITPEDK). A helical membrane pass occupies residues 226–246 (WLILLATFYVAVTVPYNVCFI). At 247–255 (GNDDLSTTR) the chain is on the extracellular side. The helical transmembrane segment at 256 to 276 (STTVSDIAVEILFIIDIILNF) threads the bilayer. At 277–298 (RTTYVSKSGQVIFEARSICIHY) the chain is on the cytoplasmic side. Residues 299 to 319 (VTTWFIIDLIAALPFDLLYAF) traverse the membrane as a helical segment. Asparagine 320 is a glycosylation site (N-linked (GlcNAc...) asparagine). Residues 320-327 (NVTVVSLV) lie on the Extracellular side of the membrane. The helical; Voltage-sensor transmembrane segment at 328 to 348 (HLLKTVRLLRLLRLLQKLDRY) threads the bilayer. Topologically, residues 349–357 (SQHSTIVLT) are cytoplasmic. The chain crosses the membrane as a helical span at residues 358–378 (LLMSMFALLAHWMACIWYVIG). At 379-419 (KMEREDNSLLKWEVGWLHELGKRLESPYYGNNTLGGPSIRS) the chain is on the extracellular side. Asparagine 409 carries an N-linked (GlcNAc...) asparagine glycan. Residues 420 to 440 (AYIAALYFTLSSLTSVGFGNV) constitute an intramembrane region (pore-forming). Residues 434–439 (SVGFGN) carry the Selectivity filter motif. At 441–448 (SANTDAEK) the chain is on the extracellular side. A helical transmembrane segment spans residues 449 to 469 (IFSICTMLIGALMHALVFGNV). The Cytoplasmic segment spans residues 470–1107 (TAIIQRMYSR…EVKDNKAINV (638 aa)). Residues 551–668 (LFECASRGCL…HKFVEDIQHD (118 aa)) form a cNMP-binding domain region. Positions 686 to 702 (SNKSMVSQSEPKGNGNI) are enriched in polar residues. 4 disordered regions span residues 686–742 (SNKS…NKKV), 764–791 (HSPIRVSRSNSPKTKQEIDPPNHNKRKE), 818–847 (EDGNSSEESQTFDFGSERIRSEPRISPPLG), and 961–989 (VDPSSVGSSPQRTGAHEQNPADSELYHSP). The span at 710–724 (VEDEEEEEEGEEEEA) shows a compositional bias: acidic residues. Residues 961–972 (VDPSSVGSSPQR) show a composition bias toward polar residues.

This sequence belongs to the potassium channel family. H (Eag) (TC 1.A.1.20) subfamily. Kv12.1/KCNH8 sub-subfamily. The potassium channel is probably composed of a homo- or heterotetrameric complex of pore-forming alpha subunits that can associate with modulating beta subunits. As to expression, primarily expressed in the nervous system.

The protein localises to the membrane. The catalysed reaction is K(+)(in) = K(+)(out). Pore-forming (alpha) subunit of a voltage-gated delayed rectifier potassium channel that mediates outward-rectifying potassium currents. Elicits a slowly activating, non-inactivating and slowly deactivation outwards potassium current at depolarizating voltages from -30 mV to +50mV. Shows no obvious change in the activation rate from different holding potentials. Activation is strongly dependent on the pH of the external solution. The sequence is that of Voltage-gated delayed rectifier potassium channel KCNH8 from Homo sapiens (Human).